The chain runs to 829 residues: Cation/H(+) antiporter 14 (829 aa).

12 helical membrane-spanning segments follow: residues 48-68, 77-97, 117-137, 145-165, 180-200, 215-235, 240-260, 281-301, 329-349, 361-383, 392-412, and 425-445; these read YAMP…RLLY, GMIS…FGQS, SNLG…ASII, ILIG…TVLF, ISTV…TVLA, NCSI…RMFL, LASV…FFVC, IPFF…EVLG, LEMF…GLQT, IIEA…ASAY, FSLA…CVMW, and LLII…VCLY. The residue at position 827 (serine 827) is a Phosphoserine.

Belongs to the monovalent cation:proton antiporter 2 (CPA2) transporter (TC 2.A.37) family. CHX (TC 2.A.37.4) subfamily. Preferentially expressed in pollen but also detected in vegetative tissues like leaf trichomes and root vascular tissues.

It localises to the membrane. In terms of biological role, may operate as a cation/H(+) antiporter. This chain is Cation/H(+) antiporter 14 (CHX14), found in Arabidopsis thaliana (Mouse-ear cress).